Reading from the N-terminus, the 638-residue chain is uncharacterized protein (638 aa).

The CID domain occupies 1 to 138 (MDLVELDYLS…KIENALLKYK (138 aa)). Disordered stretches follow at residues 318 to 338 (QPPLTHSYVHPGPQSHKYSLS) and 615 to 638 (LGKRKERDDSMDSMSSKVIKQESK).

This is an uncharacterized protein from Schizosaccharomyces pombe (strain 972 / ATCC 24843) (Fission yeast).